The following is a 2491-amino-acid chain: Cation-independent mannose-6-phosphate receptor (2491 aa).

The signal sequence occupies residues 1-40 (MGAAAGRSPHLGPAPARRPQRSLLLLQLLLLVAAPGSTQA). Over 41–2304 (QAAPFPELCS…MHKGLSERSQ (2264 aa)) the chain is Lumenal. 12 consecutive MRH domains span residues 47 to 163 (ELCS…ACKK), 172 to 320 (VPCY…ACHR), 326 to 468 (KTCS…ACVK), 473 to 619 (LLCG…ACVL), 625 to 762 (ENCT…ACPE), 765 to 924 (LECV…ACPI), 932 to 1079 (QACS…ACVP), 1082 to 1219 (VDCQ…ACPV), 1225 to 1363 (DNCE…ACPP), 1367 to 1508 (TECS…ACPM), 1514 to 1648 (DDCQ…ACEQ), and 1650 to 1797 (TECS…VCPD). Disulfide bonds link C49/C69 and C77/C84. N112 carries N-linked (GlcNAc...) asparagine glycosylation. Cystine bridges form between C117–C149, C134–C161, C174–C212, C228–C235, C275–C306, C288–C318, C328–C366, and C374–C382. N-linked (GlcNAc...) asparagine glycans are attached at residues N400 and N435. Disulfide bonds link C420–C454, C434–C466, C475–C519, and C531–C538. N-linked (GlcNAc...) asparagine glycosylation is found at N543 and N581. 2 disulfides stabilise this stretch: C572–C605 and C586–C617. Residue N626 is glycosylated (N-linked (GlcNAc...) asparagine). 5 cysteine pairs are disulfide-bonded: C627-C664, C672-C679, C731-C760, C767-C814, and C823-C830. The N-linked (GlcNAc...) asparagine glycan is linked to N747. N-linked (GlcNAc...) asparagine glycosylation is present at N871. 7 cysteine pairs are disulfide-bonded: C875–C910, C893–C922, C934–C970, C976–C987, C1042–C1077, C1084–C1125, and C1134–C1142. N-linked (GlcNAc...) asparagine glycosylation is found at N951 and N957. N1164 is a glycosylation site (N-linked (GlcNAc...) asparagine). Cystine bridges form between C1177-C1205, C1190-C1217, C1227-C1262, and C1270-C1282. A glycan (N-linked (GlcNAc...) asparagine) is linked at N1246. N1312 carries N-linked (GlcNAc...) asparagine glycosylation. 24 cysteine pairs are disulfide-bonded: C1319/C1349, C1333/C1361, C1369/C1408, C1420/C1427, C1461/C1494, C1476/C1506, C1516/C1553, C1559/C1566, C1598/C1634, C1614/C1646, C1652/C1695, C1706/C1713, C1750/C1783, C1766/C1795, C1804/C1839, C1850/C1856, C1893/C1975, C1903/C1927, C1917/C1942, C1957/C1987, C1994/C2029, C2039/C2046, C2082/C2113, and C2096/C2125. Residue N1656 is glycosylated (N-linked (GlcNAc...) asparagine). N1757 is a glycosylation site (N-linked (GlcNAc...) asparagine). Positions 1802–1989 (DGCTLTDEQL…EWKTKVVCPP (188 aa)) constitute a Fibronectin type-II domain. N1816 is a glycosylation site (N-linked (GlcNAc...) asparagine). MRH domains follow at residues 1992-2127 (LECK…ACAV) and 2135-2280 (VNGT…VCPL). N2085 is a glycosylation site (N-linked (GlcNAc...) asparagine). Residue N2136 is glycosylated (N-linked (GlcNAc...) asparagine). 3 disulfide bridges follow: C2188-C2194, C2232-C2266, and C2248-C2278. A helical transmembrane segment spans residues 2305–2327 (AVGAVLSLLLVALTCCLLALLLY). At 2328–2491 (KKERRETVIS…DDSDEDLLHI (164 aa)) the chain is on the cytoplasmic side. An N6-acetyllysine modification is found at K2352. Residue S2409 is modified to Phosphoserine. The segment at 2424–2491 (GRGAGAESSH…DDSDEDLLHI (68 aa)) is disordered. Residue R2425 is modified to Omega-N-methylarginine. The segment covering 2444-2459 (QEREDDRVGLVRGEKA) has biased composition (basic and acidic residues). The segment covering 2464–2477 (SSSAQQKTVSSTKL) has biased composition (polar residues). Phosphoserine is present on residues S2479 and S2484. The span at 2479-2491 (SFHDDSDEDLLHI) shows a compositional bias: basic and acidic residues.

The protein belongs to the MRL1/IGF2R family. In terms of assembly, binds HA-I and HA-II plasma membrane adapters. Interacts with DPP4; the interaction is direct. Binds GGA1, GGA2 and GGA3. Interacts with the heterotrimeric retromer cargo-selective complex (CSC), formed by VPS26 (VPS26A or VPS26B), VPS29 and VPS35; which is involved in retrograde trafficking of the receptor from endosomes to the Golgi apparatus. In terms of processing, palmitoylated. Undergoes cysteine S-palmitoylation which promotes interaction with the retromer cargo-selective complex which mediates its retrograde trafficking to the Golgi apparatus.

The protein resides in the golgi apparatus membrane. The protein localises to the endosome membrane. Mediates the transport of phosphorylated lysosomal enzymes from the Golgi complex and the cell surface to lysosomes. Lysosomal enzymes bearing phosphomannosyl residues bind specifically to mannose-6-phosphate receptors in the Golgi apparatus and the resulting receptor-ligand complex is transported to an acidic prelysosomal compartment where the low pH mediates the dissociation of the complex. The receptor is then recycled back to the Golgi for another round of trafficking through its binding to the retromer. This receptor also binds IGF2. Acts as a positive regulator of T-cell coactivation by binding DPP4. The protein is Cation-independent mannose-6-phosphate receptor (IGF2R) of Homo sapiens (Human).